The sequence spans 293 residues: MKPIVGSIVALVTPMHEDGSVDYPSLRRLIDWHIAEGTDCIGVVGTTGESPTVAPEEHCEIIRVAVEHVAGRVPVMAGAGANSTREAIELSRYAKQVGADCTLQVVPYYNKPTQEGQYQHFRSIAEAVDIPVVLYNVPGRTVADMLPETVLRLAQVPGIVGLKEATGNIERACWLIKQAPKGFSIYSGDDPTAVALMLLGGHGNVSVTANVAPRAMHELCVAAMAGDAKRAAKIHLALLPLHKQLFCEPNPIPVKWALQRMGRCGGALRLPLTPLSAALQPVVEQSLRDAGLL.

A pyruvate-binding site is contributed by Thr-47. The Proton donor/acceptor role is filled by Tyr-135. Lys-163 serves as the catalytic Schiff-base intermediate with substrate. Val-205 is a pyruvate binding site.

It belongs to the DapA family. As to quaternary structure, homotetramer; dimer of dimers.

Its subcellular location is the cytoplasm. The catalysed reaction is L-aspartate 4-semialdehyde + pyruvate = (2S,4S)-4-hydroxy-2,3,4,5-tetrahydrodipicolinate + H2O + H(+). It participates in amino-acid biosynthesis; L-lysine biosynthesis via DAP pathway; (S)-tetrahydrodipicolinate from L-aspartate: step 3/4. In terms of biological role, catalyzes the condensation of (S)-aspartate-beta-semialdehyde [(S)-ASA] and pyruvate to 4-hydroxy-tetrahydrodipicolinate (HTPA). The sequence is that of 4-hydroxy-tetrahydrodipicolinate synthase from Methylibium petroleiphilum (strain ATCC BAA-1232 / LMG 22953 / PM1).